Here is an 811-residue protein sequence, read N- to C-terminus: Protein kinase C-binding protein NELL2a (811 aa).

The signal sequence occupies residues 1 to 18; the sequence is MAFLQLFVGLLCGAAVSA. The Laminin G-like domain maps to 54 to 225; sequence AFMFQGSSRS…TQCPDLNRTC (172 aa). N-linked (GlcNAc...) asparagine glycans are attached at residues N222, N290, and N295. In terms of domain architecture, VWFC 1 spans 269-328; it reads RTCRVKDQIYREEQSWTDGCKNCTCSNGTVRCEKILCPPLDCPDGTTPAYVTGTCCKECQ. The region spanning 395-437 is the EGF-like 1 domain; sequence GHDFCAEENICSENSDCVNLDAGASCGCKNGFRPLRLDSAYCE. Intrachain disulfides connect C399-C411, C405-C420, and C422-C436. D438, I439, and E441 together coordinate Ca(2+). The region spanning 438–479 is the EGF-like 2; calcium-binding domain; it reads DIDECAEGRHYCRENTECVNTAGSFMCVCHTGFIRIDDYSCT. Disulfide bonds link C442/C455, C449/C464, C466/C478, C484/C497, C491/C506, C508/C519, C523/C533, C527/C539, and C541/C550. Ca(2+) contacts are provided by N457, T458, and S461. The EGF-like 3; calcium-binding domain maps to 480-520; it reads EHDECASGQHDCDENALCFNTVGGHSCSCKPGYSGNGTVCR. N-linked (GlcNAc...) asparagine glycosylation is present at N515. Positions 521-551 constitute an EGF-like 4 domain; sequence ALCDGRCLNGGSCASPNVCVCVQGFSGQNCE. Residues D553, I554, and E556 each contribute to the Ca(2+) site. The region spanning 553 to 592 is the EGF-like 5; calcium-binding domain; it reads DIDECSEGLVQCAAHATCVNLPGWYHCECRDGYHDNEVFS. Cystine bridges form between C557-C570, C564-C579, and C581-C598. Positions 572, 573, and 576 each coordinate Ca(2+). Residues D600, I601, and E603 each coordinate Ca(2+). Residues 600–635 form the EGF-like 6; calcium-binding domain; it reads DIDECRTGRSTCANDTVCFNLDGGFDCRCPHGHNCS. 3 disulfide bridges follow: C604–C617, C611–C626, and C628–C634. An N-linked (GlcNAc...) asparagine glycan is attached at N613. Residues N619, L620, and G623 each contribute to the Ca(2+) site. N-linked (GlcNAc...) asparagine glycosylation occurs at N633. VWFC domains lie at 636-691 and 696-754; these read GDCI…PECD and SQCL…PRCV.

As to quaternary structure, homotrimer.

The protein resides in the secreted. Functionally, may regulate neuronal differentiation, polarization and axon guidance. The sequence is that of Protein kinase C-binding protein NELL2a (nell2a) from Danio rerio (Zebrafish).